A 214-amino-acid chain; its full sequence is MEFFLDTANLEEIRKAKAQGLMDGVTTNPTLLSREGGDWRKQAEAICAEVEGPVSLEVVGESAEEMIREAEDLASFGDNVVIKVPMTNEGLVATESLYRKGVKTNVTLVFSPLQALLAAKAGATYVSPFVGRLDGIAHDGMELIRQIRTIFDNYDFPTKILVASIRHPMHVLDSALIGADVATIPYSVISQLAAHPLTDKGLAAFNADWEKLTK.

Lys83 (schiff-base intermediate with substrate) is an active-site residue.

Belongs to the transaldolase family. Type 3B subfamily.

The protein resides in the cytoplasm. It catalyses the reaction D-sedoheptulose 7-phosphate + D-glyceraldehyde 3-phosphate = D-erythrose 4-phosphate + beta-D-fructose 6-phosphate. It functions in the pathway carbohydrate degradation; pentose phosphate pathway; D-glyceraldehyde 3-phosphate and beta-D-fructose 6-phosphate from D-ribose 5-phosphate and D-xylulose 5-phosphate (non-oxidative stage): step 2/3. In terms of biological role, transaldolase is important for the balance of metabolites in the pentose-phosphate pathway. This is Probable transaldolase from Maridesulfovibrio salexigens (strain ATCC 14822 / DSM 2638 / NCIMB 8403 / VKM B-1763) (Desulfovibrio salexigens).